A 1258-amino-acid polypeptide reads, in one-letter code: Cohesin subunit SA-1 (1258 aa).

The disordered stretch occupies residues 1–59; sequence MITSELPVLQDSTNETTAHSDAGSELEETEVKGKRKRGRPGRPPSTNKKPRKSPGEKSR. Residues 10-19 are compositionally biased toward polar residues; the sequence is QDSTNETTAH. S24 bears the Phosphoserine mark. Residues 296-381 form the SCD domain; it reads FVHRYRDAIA…NRFKDRIVSM (86 aa). Phosphoserine is present on residues S756, S1062, and S1065. Positions 1055–1148 are disordered; it reads GGEDDRMSVN…EHGSEPDFLH (94 aa). Positions 1062–1075 are enriched in low complexity; sequence SVNSGSSSSKTSSV. Residues 1076–1087 are compositionally biased toward basic residues; sequence RSKKGRPPLHRK. A Phosphoserine modification is found at S1093. The segment covering 1095–1106 has biased composition (polar residues); the sequence is DNTWLNRTDTMI. The segment covering 1137–1146 has biased composition (basic and acidic residues); that stretch reads ESEHGSEPDF. K1161 participates in a covalent cross-link: Glycyl lysine isopeptide (Lys-Gly) (interchain with G-Cter in SUMO2).

This sequence belongs to the SCC3 family. As to quaternary structure, cohesin complexes are composed of a heterodimer between a SMC1 protein (SMC1A or SMC1B) and SMC3, which are attached via their hinge domain, and RAD21 which link them at their heads, and one STAG protein (STAG1, STAG2 or STAG3). In cohesin complexes, STAG1 is mutually exclusive with STAG2 and STAG3. Interacts directly with RAD21 in cohesin complex. The cohesin complex interacts with the cohesin loading complex subunits NIPBL/Scc2 (via HEAT repeats) and MAU2/Scc4. NIPBL directly contacts all members of the complex, RAD21, SMC1A/B, SMC3 and STAG1. Post-translationally, phosphorylated by PLK1. The large dissociation of cohesin from chromosome arms during prophase is partly due to its phosphorylation.

It localises to the nucleus. It is found in the chromosome. In terms of biological role, component of cohesin complex, a complex required for the cohesion of sister chromatids after DNA replication. The cohesin complex apparently forms a large proteinaceous ring within which sister chromatids can be trapped. At anaphase, the complex is cleaved and dissociates from chromatin, allowing sister chromatids to segregate. The cohesin complex may also play a role in spindle pole assembly during mitosis. This chain is Cohesin subunit SA-1 (Stag1), found in Mus musculus (Mouse).